A 60-amino-acid polypeptide reads, in one-letter code: UPF0391 membrane protein CCNA_00709 (60 aa).

2 helical membrane-spanning segments follow: residues 4–24 and 33–53; these read WAII…SGLA and ILFF…GTVF.

The protein belongs to the UPF0391 family.

The protein resides in the cell membrane. The sequence is that of UPF0391 membrane protein CCNA_00709 from Caulobacter vibrioides (strain NA1000 / CB15N) (Caulobacter crescentus).